The chain runs to 252 residues: 2-succinyl-6-hydroxy-2,4-cyclohexadiene-1-carboxylate synthase (252 aa).

Belongs to the AB hydrolase superfamily. MenH family. As to quaternary structure, monomer.

The enzyme catalyses 5-enolpyruvoyl-6-hydroxy-2-succinyl-cyclohex-3-ene-1-carboxylate = (1R,6R)-6-hydroxy-2-succinyl-cyclohexa-2,4-diene-1-carboxylate + pyruvate. The protein operates within quinol/quinone metabolism; 1,4-dihydroxy-2-naphthoate biosynthesis; 1,4-dihydroxy-2-naphthoate from chorismate: step 3/7. It participates in quinol/quinone metabolism; menaquinone biosynthesis. In terms of biological role, catalyzes a proton abstraction reaction that results in 2,5-elimination of pyruvate from 2-succinyl-5-enolpyruvyl-6-hydroxy-3-cyclohexene-1-carboxylate (SEPHCHC) and the formation of 2-succinyl-6-hydroxy-2,4-cyclohexadiene-1-carboxylate (SHCHC). This chain is 2-succinyl-6-hydroxy-2,4-cyclohexadiene-1-carboxylate synthase, found in Salmonella arizonae (strain ATCC BAA-731 / CDC346-86 / RSK2980).